Consider the following 491-residue polypeptide: N-succinylglutamate 5-semialdehyde dehydrogenase (491 aa).

223–228 (GSANTG) contacts NAD(+). Residues E246 and C280 contribute to the active site.

Belongs to the aldehyde dehydrogenase family. AstD subfamily.

It catalyses the reaction N-succinyl-L-glutamate 5-semialdehyde + NAD(+) + H2O = N-succinyl-L-glutamate + NADH + 2 H(+). It participates in amino-acid degradation; L-arginine degradation via AST pathway; L-glutamate and succinate from L-arginine: step 4/5. Its function is as follows. Catalyzes the NAD-dependent reduction of succinylglutamate semialdehyde into succinylglutamate. The sequence is that of N-succinylglutamate 5-semialdehyde dehydrogenase from Photorhabdus laumondii subsp. laumondii (strain DSM 15139 / CIP 105565 / TT01) (Photorhabdus luminescens subsp. laumondii).